We begin with the raw amino-acid sequence, 84 residues long: UPF0457 protein BC_3525 (84 aa).

Belongs to the UPF0457 family.

In Bacillus cereus (strain ATCC 14579 / DSM 31 / CCUG 7414 / JCM 2152 / NBRC 15305 / NCIMB 9373 / NCTC 2599 / NRRL B-3711), this protein is UPF0457 protein BC_3525.